The primary structure comprises 138 residues: Putative pre-16S rRNA nuclease (138 aa).

It belongs to the YqgF nuclease family.

It is found in the cytoplasm. In terms of biological role, could be a nuclease involved in processing of the 5'-end of pre-16S rRNA. This Geobacillus kaustophilus (strain HTA426) protein is Putative pre-16S rRNA nuclease.